The sequence spans 264 residues: Hydroxyethylthiazole kinase (264 aa).

A substrate-binding site is contributed by M43. The ATP site is built by K119 and S165. G192 serves as a coordination point for substrate.

Belongs to the Thz kinase family. The cofactor is Mg(2+).

It carries out the reaction 5-(2-hydroxyethyl)-4-methylthiazole + ATP = 4-methyl-5-(2-phosphooxyethyl)-thiazole + ADP + H(+). The protein operates within cofactor biosynthesis; thiamine diphosphate biosynthesis; 4-methyl-5-(2-phosphoethyl)-thiazole from 5-(2-hydroxyethyl)-4-methylthiazole: step 1/1. In terms of biological role, catalyzes the phosphorylation of the hydroxyl group of 4-methyl-5-beta-hydroxyethylthiazole (THZ). This chain is Hydroxyethylthiazole kinase, found in Methanocorpusculum labreanum (strain ATCC 43576 / DSM 4855 / Z).